The chain runs to 78 residues: Acyl carrier protein (78 aa).

Residues 2–77 enclose the Carrier domain; the sequence is STIEERVKKI…AAIDYVNAHQ (76 aa). Serine 37 carries the post-translational modification O-(pantetheine 4'-phosphoryl)serine.

It belongs to the acyl carrier protein (ACP) family. In terms of processing, 4'-phosphopantetheine is transferred from CoA to a specific serine of apo-ACP by AcpS. This modification is essential for activity because fatty acids are bound in thioester linkage to the sulfhydryl of the prosthetic group.

The protein resides in the cytoplasm. It functions in the pathway lipid metabolism; fatty acid biosynthesis. Its function is as follows. Carrier of the growing fatty acid chain in fatty acid biosynthesis. The chain is Acyl carrier protein from Pseudomonas entomophila (strain L48).